A 314-amino-acid polypeptide reads, in one-letter code: MIRIGTRGSLLATTQAAIVRDALIANGHAAELVTISTLGDRSSAPIETLGVGVFTTALREAIEDGRVDAAVHSHKDLPTAQDPRFTIAAIPPRQDPRDAVVARDGLVLGELPVGSLVGTSSPRRAAQFRALGLGLEIRPLRGNLDTRLNRVSNGDLDAIVVARAGLARLGRLDDVTETLEPVQMLPAPAQGALAIECRAGDSRLATVLAELDDADTRAAVTAERALLAELEAGCSAPVGAIAEVVESIDEEGRVFEELSLRGCVAALDGSDVIRASGIGTSGRARELGLAVAAELFELGARELMWGEGNSPQGS.

At cysteine 234 the chain carries S-(dipyrrolylmethanemethyl)cysteine.

This sequence belongs to the HMBS family. As to quaternary structure, monomer. Dipyrromethane is required as a cofactor.

The catalysed reaction is 4 porphobilinogen + H2O = hydroxymethylbilane + 4 NH4(+). It participates in porphyrin-containing compound metabolism; protoporphyrin-IX biosynthesis; coproporphyrinogen-III from 5-aminolevulinate: step 2/4. In terms of biological role, tetrapolymerization of the monopyrrole PBG into the hydroxymethylbilane pre-uroporphyrinogen in several discrete steps. This is Porphobilinogen deaminase from Mycobacterium ulcerans (strain Agy99).